Reading from the N-terminus, the 312-residue chain is Olfactory receptor 10D3 (312 aa).

At 1–26 the chain is on the extracellular side; that stretch reads MEIKNCSVVTEFILLGIPHTEGFETL. Residue asparagine 5 is glycosylated (N-linked (GlcNAc...) asparagine). Residues 27-47 traverse the membrane as a helical segment; the sequence is LFVLFLPFYACTLVGNVSILV. The Cytoplasmic segment spans residues 48–57; that stretch reads AVISSTRLHT. Residues 58-78 traverse the membrane as a helical segment; it reads PMYFFLGNLSVFDMGFSSVTC. Over 79-97 the chain is Extracellular; sequence PKMLFYLMGLSRLISYQDC. A disulfide bridge connects residues cysteine 97 and cysteine 179. The chain crosses the membrane as a helical span at residues 98 to 118; the sequence is VSQLFFFHFLGSIECFLYTVM. Residues 119–139 lie on the Cytoplasmic side of the membrane; that stretch reads AYDRFAAICHPLRYSVIMNSK. The chain crosses the membrane as a helical span at residues 140-160; it reads ICVALAVGTWLLGCFHSSVLT. Over 161-197 the chain is Extracellular; the sequence is SLTFTLPYCGPNEVDHFFCDIPAILPLASADTSLAQR. Residues 198–218 traverse the membrane as a helical segment; sequence VSFTNVGLVSLVCFLLILLSY. Topologically, residues 219-239 are cytoplasmic; that stretch reads TRITISILSIQSTEGRQRAFS. Residues 240–260 form a helical membrane-spanning segment; it reads TCSAHLIAILCAYGPIITIYL. Residues 261-266 are Extracellular-facing; the sequence is QPTPNP. A helical membrane pass occupies residues 267–287; the sequence is MLGTVVQILMNLVGPMLNPLI. The Cytoplasmic portion of the chain corresponds to 288 to 312; that stretch reads YTLRNKEVKIALKKILHGKGSVSEG.

This sequence belongs to the G-protein coupled receptor 1 family.

It localises to the cell membrane. In terms of biological role, potential odorant receptor. The sequence is that of Olfactory receptor 10D3 from Mus musculus (Mouse).